The primary structure comprises 187 residues: Large ribosomal subunit protein uL10 (187 aa).

This sequence belongs to the universal ribosomal protein uL10 family. As to quaternary structure, part of the ribosomal stalk of the 50S ribosomal subunit. The N-terminus interacts with L11 and the large rRNA to form the base of the stalk. The C-terminus forms an elongated spine to which L12 dimers bind in a sequential fashion forming a multimeric L10(L12)X complex.

In terms of biological role, forms part of the ribosomal stalk, playing a central role in the interaction of the ribosome with GTP-bound translation factors. This is Large ribosomal subunit protein uL10 from Synechococcus sp. (strain JA-2-3B'a(2-13)) (Cyanobacteria bacterium Yellowstone B-Prime).